We begin with the raw amino-acid sequence, 181 residues long: Large ribosomal subunit protein bL17 (181 aa).

The disordered stretch occupies residues 129-181; it reads AEKSEKSAKTAKAAKAPAKKATAKKASTKAVAAKKKAVKKAQKKDRAASAARA. Residues 145–171 show a composition bias toward basic residues; the sequence is PAKKATAKKASTKAVAAKKKAVKKAQK.

This sequence belongs to the bacterial ribosomal protein bL17 family. Part of the 50S ribosomal subunit. Contacts protein L32.

The protein is Large ribosomal subunit protein bL17 of Bdellovibrio bacteriovorus (strain ATCC 15356 / DSM 50701 / NCIMB 9529 / HD100).